Consider the following 360-residue polypeptide: UDP-N-acetylglucosamine--N-acetylmuramyl-(pentapeptide) pyrophosphoryl-undecaprenol N-acetylglucosamine transferase (360 aa).

Residues 12–14, S198, and Q289 contribute to the UDP-N-acetyl-alpha-D-glucosamine site; that span reads TAG.

It belongs to the glycosyltransferase 28 family. MurG subfamily.

The protein resides in the cell membrane. It catalyses the reaction Mur2Ac(oyl-L-Ala-gamma-D-Glu-L-Lys-D-Ala-D-Ala)-di-trans,octa-cis-undecaprenyl diphosphate + UDP-N-acetyl-alpha-D-glucosamine = beta-D-GlcNAc-(1-&gt;4)-Mur2Ac(oyl-L-Ala-gamma-D-Glu-L-Lys-D-Ala-D-Ala)-di-trans,octa-cis-undecaprenyl diphosphate + UDP + H(+). It participates in cell wall biogenesis; peptidoglycan biosynthesis. Its function is as follows. Cell wall formation. Catalyzes the transfer of a GlcNAc subunit on undecaprenyl-pyrophosphoryl-MurNAc-pentapeptide (lipid intermediate I) to form undecaprenyl-pyrophosphoryl-MurNAc-(pentapeptide)GlcNAc (lipid intermediate II). The sequence is that of UDP-N-acetylglucosamine--N-acetylmuramyl-(pentapeptide) pyrophosphoryl-undecaprenol N-acetylglucosamine transferase from Streptococcus equi subsp. zooepidemicus (strain H70).